Consider the following 273-residue polypeptide: Large ribosomal subunit protein uL2c (273 aa).

2 disordered regions span residues 30–55 (EKKL…RHRG) and 222–243 (GSAM…PIGR). The segment covering 45 to 55 (NKGRITTRHRG) has biased composition (basic residues).

Belongs to the universal ribosomal protein uL2 family. As to quaternary structure, part of the 50S ribosomal subunit.

The protein localises to the plastid. This Prototheca wickerhamii protein is Large ribosomal subunit protein uL2c (rpl2).